We begin with the raw amino-acid sequence, 745 residues long: TonB-dependent heme receptor A (745 aa).

An N-terminal signal peptide occupies residues 1-24 (MNILINKRIFLLVTLVGIQLNVTA). One can recognise a TBDR plug domain in the interval 45 to 157 (DDSNKLPGRS…FAGTVKFETK (113 aa)). A TBDR beta-barrel domain is found at 168-745 (KIGGFLKYGN…NIKFSLSQKF (578 aa)).

It belongs to the TonB-dependent receptor family.

It is found in the cell outer membrane. Its function is as follows. Heme receptor. The polypeptide is TonB-dependent heme receptor A (tdhA) (Haemophilus influenzae (strain 86-028NP)).